Reading from the N-terminus, the 38-residue chain is Cytochrome b6-f complex subunit 5 (38 aa).

A helical transmembrane segment spans residues 5 to 25; that stretch reads LLLGIVLGLIPITLAGLFVAA.

This sequence belongs to the PetG family. As to quaternary structure, the 4 large subunits of the cytochrome b6-f complex are cytochrome b6, subunit IV (17 kDa polypeptide, PetD), cytochrome f and the Rieske protein, while the 4 small subunits are PetG, PetL, PetM and PetN. The complex functions as a dimer.

The protein resides in the cellular thylakoid membrane. Component of the cytochrome b6-f complex, which mediates electron transfer between photosystem II (PSII) and photosystem I (PSI), cyclic electron flow around PSI, and state transitions. PetG is required for either the stability or assembly of the cytochrome b6-f complex. This Crocosphaera subtropica (strain ATCC 51142 / BH68) (Cyanothece sp. (strain ATCC 51142)) protein is Cytochrome b6-f complex subunit 5.